A 107-amino-acid polypeptide reads, in one-letter code: UPF0122 protein EAT1b_2891 (107 aa).

It belongs to the UPF0122 family.

In terms of biological role, might take part in the signal recognition particle (SRP) pathway. This is inferred from the conservation of its genetic proximity to ftsY/ffh. May be a regulatory protein. The polypeptide is UPF0122 protein EAT1b_2891 (Exiguobacterium sp. (strain ATCC BAA-1283 / AT1b)).